A 337-amino-acid polypeptide reads, in one-letter code: Ketol-acid reductoisomerase (NADP(+)) (337 aa).

In terms of domain architecture, KARI N-terminal Rossmann spans 3 to 183 (VEMFYDDDAD…GGTRAGVIKT (181 aa)). NADP(+) is bound by residues 26-29 (YGSQ), Lys49, Ser52, Ser54, and 84-87 (DTAQ). His109 is a catalytic residue. Gly135 is a binding site for NADP(+). Residues 184–329 (TFKEETETDL…KKLRDLMSWV (146 aa)) enclose the KARI C-terminal knotted domain. Mg(2+) contacts are provided by Asp192, Glu196, Glu228, and Glu232. Ser253 lines the substrate pocket.

Belongs to the ketol-acid reductoisomerase family. Mg(2+) is required as a cofactor.

It catalyses the reaction (2R)-2,3-dihydroxy-3-methylbutanoate + NADP(+) = (2S)-2-acetolactate + NADPH + H(+). The catalysed reaction is (2R,3R)-2,3-dihydroxy-3-methylpentanoate + NADP(+) = (S)-2-ethyl-2-hydroxy-3-oxobutanoate + NADPH + H(+). It functions in the pathway amino-acid biosynthesis; L-isoleucine biosynthesis; L-isoleucine from 2-oxobutanoate: step 2/4. It participates in amino-acid biosynthesis; L-valine biosynthesis; L-valine from pyruvate: step 2/4. In terms of biological role, involved in the biosynthesis of branched-chain amino acids (BCAA). Catalyzes an alkyl-migration followed by a ketol-acid reduction of (S)-2-acetolactate (S2AL) to yield (R)-2,3-dihydroxy-isovalerate. In the isomerase reaction, S2AL is rearranged via a Mg-dependent methyl migration to produce 3-hydroxy-3-methyl-2-ketobutyrate (HMKB). In the reductase reaction, this 2-ketoacid undergoes a metal-dependent reduction by NADPH to yield (R)-2,3-dihydroxy-isovalerate. The protein is Ketol-acid reductoisomerase (NADP(+)) of Rhodococcus jostii (strain RHA1).